The chain runs to 187 residues: Putative gamma-glutamylcyclotransferase At3g02910 (187 aa).

Residue Tyr-17–Leu-20 participates in substrate binding. The Proton acceptor role is filled by Glu-92.

The protein belongs to the gamma-glutamylcyclotransferase family.

Functionally, putative gamma-glutamylcyclotransferase. This is Putative gamma-glutamylcyclotransferase At3g02910 from Arabidopsis thaliana (Mouse-ear cress).